A 97-amino-acid chain; its full sequence is MKIRPLHDRVIVKRKEVESKSAGGIVLTGSAAGKSTRGEVLAVGHGRVLENGGVKALDVRIGDTVIFNDGYGVKVEKIDNEEVLIMSESDILAIVEK.

Belongs to the GroES chaperonin family. Heptamer of 7 subunits arranged in a ring. Interacts with the chaperonin GroEL.

It is found in the cytoplasm. In terms of biological role, together with the chaperonin GroEL, plays an essential role in assisting protein folding. The GroEL-GroES system forms a nano-cage that allows encapsulation of the non-native substrate proteins and provides a physical environment optimized to promote and accelerate protein folding. GroES binds to the apical surface of the GroEL ring, thereby capping the opening of the GroEL channel. The chain is Co-chaperonin GroES from Blochmanniella pennsylvanica (strain BPEN).